We begin with the raw amino-acid sequence, 209 residues long: Ribosomal RNA large subunit methyltransferase E (209 aa).

S-adenosyl-L-methionine contacts are provided by Gly-63, Trp-65, Asp-83, Asp-99, and Asp-124. The active-site Proton acceptor is the Lys-164.

The protein belongs to the class I-like SAM-binding methyltransferase superfamily. RNA methyltransferase RlmE family.

The protein resides in the cytoplasm. It catalyses the reaction uridine(2552) in 23S rRNA + S-adenosyl-L-methionine = 2'-O-methyluridine(2552) in 23S rRNA + S-adenosyl-L-homocysteine + H(+). In terms of biological role, specifically methylates the uridine in position 2552 of 23S rRNA at the 2'-O position of the ribose in the fully assembled 50S ribosomal subunit. The polypeptide is Ribosomal RNA large subunit methyltransferase E (Aeromonas hydrophila subsp. hydrophila (strain ATCC 7966 / DSM 30187 / BCRC 13018 / CCUG 14551 / JCM 1027 / KCTC 2358 / NCIMB 9240 / NCTC 8049)).